The following is a 581-amino-acid chain: MDIIKGNLDGISKPASNSRIRPGSRSSNASLEVLSTEPASCKVDTASNLNSGKEDHSESSNTENRRTSNDDKRESCSEKIKLAEEGSDEDLDLVQRQIIPECSDEHKLEELDSQLQDAIQKMKKLDKILAKTQRREKEIKKQGLEMRIKLWEEIKSAKYSEAWQSKEEMENTKKFLSLTAASEETVGPSHENEDSFSSVFHTQIPPEEYEKQMQKLSKDFTCDVERNESLIKAGKKPFSNTEKIELRGKHNQDFIKRNIELAKESRNPVVMIEREKKRLVELLKDLDEKDSGLSSSEGDQSGWVVPVKGYALAVTQHQQLAEIDIKLQELSAASPAISSFSPRLENQNNQEPDLDGEKNMEVTPGEKVLRNTKEQRDLRIRLREIDEKLRMMKENVLQSTSRLSEEQLKCLLDECIVKQKSIIKLSSEGENEDIEDVIPMFPQLSRSIISKLLNESGTKVQKTEAEDADMLESAEREASKGYYLTKALTGHRMSEALVTEVENMKCLQFSKNDIISDTKDYFMSKTLGIGRLKRPSFLDDPLYGITVSLSSEDQHLKLNSPEKTKADEQETKDAAEECKEP.

A disordered region spans residues 1-77; it reads MDIIKGNLDG…SNDDKRESCS (77 aa). A compositionally biased stretch (polar residues) spans 14–30; it reads PASNSRIRPGSRSSNAS. Over residues 52–77 the composition is skewed to basic and acidic residues; that stretch reads GKEDHSESSNTENRRTSNDDKRESCS. S87 is subject to Phosphoserine. Residues 103–153 are a coiled coil; it reads SDEHKLEELDSQLQDAIQKMKKLDKILAKTQRREKEIKKQGLEMRIKLWEE. Disordered regions lie at residues 338 to 370 and 553 to 581; these read SSFS…KVLR and DQHL…CKEP.

This sequence belongs to the FSIP1 family.

The polypeptide is Fibrous sheath-interacting protein 1 (FSIP1) (Macaca fascicularis (Crab-eating macaque)).